A 337-amino-acid chain; its full sequence is Major outer membrane protein P.IB (337 aa).

The N-terminal stretch at 1–19 (MKKSLIALTLAALPVAAMA) is a signal peptide.

Belongs to the Gram-negative porin family. As to quaternary structure, homotrimer.

The protein resides in the cell outer membrane. Its function is as follows. Serves as a slightly cation selective porin. The protein is Major outer membrane protein P.IB (por) of Neisseria lactamica.